The primary structure comprises 60 residues: Large ribosomal subunit protein bL32 (60 aa).

Residues 1–43 (MAVQQNKKSPSKRGMHRSHDALTNPPLAIEPTTGEIHLRHHIS) form a disordered region.

This sequence belongs to the bacterial ribosomal protein bL32 family.

In Nitrosomonas europaea (strain ATCC 19718 / CIP 103999 / KCTC 2705 / NBRC 14298), this protein is Large ribosomal subunit protein bL32.